Reading from the N-terminus, the 1148-residue chain is Putative ATP-dependent RNA helicase rha-2 (1148 aa).

Over residues 1-10 (MGKRKTKEDN) the composition is skewed to basic and acidic residues. Disordered regions lie at residues 1–51 (MGKR…FAKE) and 101–163 (STKL…DAGN). Positions 138–160 (PTDDESSSEEEEEEEEGDNDIED) are enriched in acidic residues. Residues 246 to 412 (VEAINENLVT…KLFPLLTPKV (167 aa)) enclose the Helicase ATP-binding domain. 259-266 (GETGSGKT) contributes to the ATP binding site. Positions 355-358 (DEAH) match the DEAH box motif. The Helicase C-terminal domain occupies 463–703 (EVKQLITKLK…QLVLHLKSMN (241 aa)).

Belongs to the DEAD box helicase family. DEAH subfamily.

It catalyses the reaction ATP + H2O = ADP + phosphate + H(+). Functionally, probable ATP-binding RNA helicase. The protein is Putative ATP-dependent RNA helicase rha-2 (rha-2) of Caenorhabditis elegans.